We begin with the raw amino-acid sequence, 311 residues long: Aspartate carbamoyltransferase catalytic subunit (311 aa).

Carbamoyl phosphate-binding residues include Arg-55 and Thr-56. An L-aspartate-binding site is contributed by Lys-85. 3 residues coordinate carbamoyl phosphate: Arg-106, His-135, and Gln-138. Arg-168 and Arg-230 together coordinate L-aspartate. 2 residues coordinate carbamoyl phosphate: Leu-268 and Pro-269.

It belongs to the aspartate/ornithine carbamoyltransferase superfamily. ATCase family. In terms of assembly, heterododecamer (2C3:3R2) of six catalytic PyrB chains organized as two trimers (C3), and six regulatory PyrI chains organized as three dimers (R2).

It carries out the reaction carbamoyl phosphate + L-aspartate = N-carbamoyl-L-aspartate + phosphate + H(+). Its pathway is pyrimidine metabolism; UMP biosynthesis via de novo pathway; (S)-dihydroorotate from bicarbonate: step 2/3. Functionally, catalyzes the condensation of carbamoyl phosphate and aspartate to form carbamoyl aspartate and inorganic phosphate, the committed step in the de novo pyrimidine nucleotide biosynthesis pathway. The polypeptide is Aspartate carbamoyltransferase catalytic subunit (Citrobacter koseri (strain ATCC BAA-895 / CDC 4225-83 / SGSC4696)).